Here is a 339-residue protein sequence, read N- to C-terminus: Terpene synthase 7 (339 aa).

The DDxx(x)D/E motif motif lies at 79–84 (DDFLES). An NDxxSxxxD/E motif motif is present at residues 219 to 227 (NDCASYAKE).

It belongs to the terpene synthase family.

The enzyme catalyses (2E,6E)-farnesyl diphosphate = (-)-beta-barbatene + diphosphate. Functionally, terpene synthase that converts its substrate farnesyl diphosphate (FPP) into the sesquiterpene beta-barbatene. This is Terpene synthase 7 from Dictyostelium discoideum (Social amoeba).